Here is a 295-residue protein sequence, read N- to C-terminus: Iodotyrosine deiodinase (295 aa).

A helical membrane pass occupies residues 3–23 (VFSSLTPVFVAVLCVIIGFLF). The segment at 29 to 81 (KESRSKQKPSDQTARPWVDEDLQDDTEISTKDNEENNEDWMDTTDEENLPHVP) is disordered. A compositionally biased stretch (acidic residues) spans 63–75 (ENNEDWMDTTDEE). FMN contacts are provided by residues 106-110 (RRSVR), S134, and 134-135 (SG). 3-iodo-L-tyrosine-binding residues include A136, E163, Y167, and K188. Residues 243–245 (TTT) and R285 contribute to the FMN site.

The protein belongs to the nitroreductase family. It depends on FMN as a cofactor.

Its subcellular location is the membrane. The enzyme catalyses 2 iodide + L-tyrosine + 2 NADP(+) = 3,5-diiodo-L-tyrosine + 2 NADPH + H(+). The catalysed reaction is iodide + L-tyrosine + NADP(+) = 3-iodo-L-tyrosine + NADPH. It carries out the reaction 3-iodo-L-tyrosine + iodide + NADP(+) = 3,5-diiodo-L-tyrosine + NADPH + H(+). It catalyses the reaction L-tyrosine + chloride + NADP(+) = 3-chloro-L-tyrosine + NADPH. The enzyme catalyses bromide + L-tyrosine + NADP(+) = 3-bromo-L-tyrosine + NADPH. Functionally, catalyzes the dehalogenation of halotyrosines such as 3,5-diiodo-L-tyrosine. Likely to also catalyze the dehalogenation of other halotyrosines such as 3-bromo-L-tyrosine, 3-chloro-L-tyrosine and 3-iodo-L-tyrosine. This Danio rerio (Zebrafish) protein is Iodotyrosine deiodinase (iyd).